We begin with the raw amino-acid sequence, 260 residues long: Phytolongin Phyl2.1 (260 aa).

The Longin domain occupies 12–114 (CIAKGTVILA…LDNPTQHCLQ (103 aa)). Residues 231–251 (WIVLMFDLCICLVLFGIWLWI) form a helical; Anchor for type IV membrane protein membrane-spanning segment.

Belongs to the synaptobrevin family.

It localises to the membrane. Functionally, non-SNARE longin protein involved in membrane-trafficking machinery. The polypeptide is Phytolongin Phyl2.1 (Arabidopsis thaliana (Mouse-ear cress)).